Reading from the N-terminus, the 181-residue chain is Large ribosomal subunit protein uL5 (181 aa).

It belongs to the universal ribosomal protein uL5 family. In terms of assembly, part of the 50S ribosomal subunit; part of the 5S rRNA/L5/L18/L25 subcomplex. Contacts the 5S rRNA and the P site tRNA. Forms a bridge to the 30S subunit in the 70S ribosome.

Its function is as follows. This is one of the proteins that bind and probably mediate the attachment of the 5S RNA into the large ribosomal subunit, where it forms part of the central protuberance. In the 70S ribosome it contacts protein S13 of the 30S subunit (bridge B1b), connecting the 2 subunits; this bridge is implicated in subunit movement. Contacts the P site tRNA; the 5S rRNA and some of its associated proteins might help stabilize positioning of ribosome-bound tRNAs. This chain is Large ribosomal subunit protein uL5, found in Helicobacter hepaticus (strain ATCC 51449 / 3B1).